Here is a 196-residue protein sequence, read N- to C-terminus: MAGTRKSNRREEILQALAQMLESTEGASRITTVKLAKQVGVSEAALYRHFPSKARMFEGLIEFIEEALMSRINRILDEEKDTLERIRLVLQLILVFSERNPGLTRILSGHALMFENERLRDRINQLFERIETQLRQILRERKLREGKSFPVDEKILAAQLLGQVEGSLNRFVRSDFKYQPTENFDAYWALLSAQIK.

Residues Ser-7–Leu-68 enclose the HTH tetR-type domain. The segment at residues Thr-31 to Phe-50 is a DNA-binding region (H-T-H motif). Residues Glu-65–Lys-142 are a coiled coil.

The protein belongs to the nucleoid occlusion factor SlmA family. In terms of assembly, homodimer. Interacts with FtsZ.

The protein resides in the cytoplasm. It localises to the nucleoid. Required for nucleoid occlusion (NO) phenomenon, which prevents Z-ring formation and cell division over the nucleoid. Acts as a DNA-associated cell division inhibitor that binds simultaneously chromosomal DNA and FtsZ, and disrupts the assembly of FtsZ polymers. SlmA-DNA-binding sequences (SBS) are dispersed on non-Ter regions of the chromosome, preventing FtsZ polymerization at these regions. This Vibrio atlanticus (strain LGP32) (Vibrio splendidus (strain Mel32)) protein is Nucleoid occlusion factor SlmA.